The primary structure comprises 118 residues: Deoxynogalonate monooxygenase (118 aa).

The 87-residue stretch at 14–100 (VTFVNRFTVH…ALSTSEHGLF (87 aa)) folds into the ABM domain.

In terms of assembly, homodimer.

It carries out the reaction deoxynogalonate + O2 = nogalonate + H2O + H(+). It participates in antibiotic biosynthesis. Functionally, involved in the biosynthesis of the anthracycline (aromatic polyketide) antibiotic nogalamycin. Catalyzes the oxygenation of 12-deoxy-nogalonic acid at position 12 to yield nogalonic acid. This Streptomyces nogalater protein is Deoxynogalonate monooxygenase.